Consider the following 37-residue polypeptide: Large ribosomal subunit protein bL36 (37 aa).

This sequence belongs to the bacterial ribosomal protein bL36 family.

The sequence is that of Large ribosomal subunit protein bL36 from Caldanaerobacter subterraneus subsp. tengcongensis (strain DSM 15242 / JCM 11007 / NBRC 100824 / MB4) (Thermoanaerobacter tengcongensis).